The chain runs to 333 residues: Tetraacyldisaccharide 4'-kinase (333 aa).

An ATP-binding site is contributed by 60 to 67 (TVGGTGKT).

This sequence belongs to the LpxK family.

It carries out the reaction a lipid A disaccharide + ATP = a lipid IVA + ADP + H(+). Its pathway is glycolipid biosynthesis; lipid IV(A) biosynthesis; lipid IV(A) from (3R)-3-hydroxytetradecanoyl-[acyl-carrier-protein] and UDP-N-acetyl-alpha-D-glucosamine: step 6/6. Transfers the gamma-phosphate of ATP to the 4'-position of a tetraacyldisaccharide 1-phosphate intermediate (termed DS-1-P) to form tetraacyldisaccharide 1,4'-bis-phosphate (lipid IVA). This Azotobacter vinelandii (strain DJ / ATCC BAA-1303) protein is Tetraacyldisaccharide 4'-kinase.